Consider the following 395-residue polypeptide: MLPAVGSADEEEDPAEEDCPELVPIETTQSEEEEKSGLGAKIPVTIITGYLGAGKTTLLNYILTEQHSKRVAVILNEFGEGSALEKSLAVSQGGELYEEWLELRNGCLCCSVKDSGLRAIENLMQKKGKFDYILLETTGLADPGAVASMFWVDAELGSDIYLDGIITIVDSKYGLKHLTEEKPDGLINEATRQVALADAILINKTDLVPEEDVKKLRTTIRSINGLGQILETQRSRVDLSNVLDLHAFDSLSGISLQKKLQHVPGTQPHLDQSIVTITFEVPGNAKEEHLNMFIQNLLWEKNVRNKDNHCMEVIRLKGLVSIKDKSQQVIVQGVHELYDLEETPVSWKDDTERTNRLVLLGRNLDKDILKQLFIATVTETEKQWTTRFQEDQVCT.

The interval 1 to 22 (MLPAVGSADEEEDPAEEDCPEL) is disordered. The segment covering 8–20 (ADEEEDPAEEDCP) has biased composition (acidic residues). A psi-PxLVp motif motif is present at residues 17–24 (EDCPELVP). 49–56 (GYLGAGKT) is a GTP binding site. The Zn(2+) site is built by C107, C109, and C110. A CXCC motif motif is present at residues 107–110 (CLCC). Residues 110 to 114 (CSVKD) and 203 to 206 (NKTD) contribute to the GTP site. The CobW C-terminal domain maps to 274–377 (IVTITFEVPG…ILKQLFIATV (104 aa)).

The protein belongs to the SIMIBI class G3E GTPase family. ZNG1 subfamily. In terms of tissue distribution, ubiquitously expressed. Up-regulated in cultured astrocytes treated with dopamine.

It is found in the nucleus. It catalyses the reaction GTP + H2O = GDP + phosphate + H(+). Its function is as follows. Zinc chaperone that directly transfers zinc cofactor to target metalloproteins, thereby activating them. Catalyzes zinc insertion into the active site of methionine aminopeptidase METAP1, which function to cleave the initiator methionine from polypeptides during or after protein translation. Mechanistically, the N-terminal psi-PxLVp motif binds to the C6H2-type zinc finger of inactive form of METAP1. After formation of the docked complex, zinc is transferred from the CXCC motif in the GTPase domain of ZNG1A to the zinc binding site in the peptidase domain of METAP1 in a process requiring GTP hydrolysis. GTP/GDP exchange is required for release of active METAP1. The protein is Zinc-regulated GTPase metalloprotein activator 1A of Homo sapiens (Human).